A 292-amino-acid chain; its full sequence is Poly-beta-1,6-N-acetyl-D-glucosamine N-deacetylase (292 aa).

An N-terminal signal peptide occupies residues 1 to 28 (MKYRKFIILVLSILIILPVSTLDGHHIA). The NodB homology domain maps to 114-292 (RSVWINFDDM…WDGFHEKDET (179 aa)).

Belongs to the polysaccharide deacetylase family.

It localises to the secreted. Its subcellular location is the cell wall. Functionally, catalyzes the N-deacetylation of poly-beta-1,6-N-acetyl-D-glucosamine (PNAG, also referred to as PIA), a biofilm adhesin polysaccharide. N-deacetylation is crucial for attachment of the polysaccharide to the bacterial cell surface; it leads to the introduction of positive charges in the otherwise neutral PIA polymer, allowing electrostatic interactions. In Staphylococcus aureus (strain COL), this protein is Poly-beta-1,6-N-acetyl-D-glucosamine N-deacetylase (icaB).